Reading from the N-terminus, the 449-residue chain is tRNA(Ile)-lysidine synthase (449 aa).

ATP is bound at residue 35–40 (SGGIDS).

It belongs to the tRNA(Ile)-lysidine synthase family.

It localises to the cytoplasm. The enzyme catalyses cytidine(34) in tRNA(Ile2) + L-lysine + ATP = lysidine(34) in tRNA(Ile2) + AMP + diphosphate + H(+). Its function is as follows. Ligates lysine onto the cytidine present at position 34 of the AUA codon-specific tRNA(Ile) that contains the anticodon CAU, in an ATP-dependent manner. Cytidine is converted to lysidine, thus changing the amino acid specificity of the tRNA from methionine to isoleucine. This Coxiella burnetii (strain RSA 493 / Nine Mile phase I) protein is tRNA(Ile)-lysidine synthase.